The following is a 255-amino-acid chain: Taurine import ATP-binding protein TauB (255 aa).

One can recognise an ABC transporter domain in the interval 2–229 (LQISHLYADY…RFVAGESSRS (228 aa)). 34-41 (GPSGCGKT) is an ATP binding site.

This sequence belongs to the ABC transporter superfamily. Taurine importer (TC 3.A.1.17.1) family. As to quaternary structure, the complex is composed of two ATP-binding proteins (TauB), two transmembrane proteins (TauC) and a solute-binding protein (TauA).

Its subcellular location is the cell inner membrane. The enzyme catalyses taurine(out) + ATP + H2O = taurine(in) + ADP + phosphate + H(+). Part of the ABC transporter complex TauABC involved in taurine import. Responsible for energy coupling to the transport system. The chain is Taurine import ATP-binding protein TauB from Shigella boydii serotype 4 (strain Sb227).